Here is a 694-residue protein sequence, read N- to C-terminus: Inactive protein-arginine deiminase type-6 (694 aa).

Phosphoserine is present on residues Ser-10 and Ser-446.

This sequence belongs to the protein arginine deiminase family. In terms of assembly, homodimers. Associates with alpha-tubulin. Post-translationally, phosphorylation at Ser-10, possibly by RSK-type kinases, and Ser-446 creates binding sites for 14-3-3 proteins. As to expression, highly expressed in oocytes and weakly expressed in other somatic tissues.

It localises to the cytoplasm. The protein resides in the cytoplasmic vesicle. Its subcellular location is the secretory vesicle. The protein localises to the cortical granule. It is found in the nucleus. In terms of biological role, structural constituent of cytoplasmic lattices, which plays a key role in early embryonic development. Cytoplasmic lattices consist in fibrous structures found in the cytoplasm of oocytes and preimplantation embryos. They are required to store maternal proteins critical for embryonic development, such as ribosomal proteins and proteins that control epigenetic reprogramming of the preimplantation embryo, and prevent their degradation or activation. In contrast to other members of the family, does not show protein-arginine deiminase activity due to its inability to bind Ca(2+). The sequence is that of Inactive protein-arginine deiminase type-6 from Homo sapiens (Human).